A 392-amino-acid chain; its full sequence is Selenide, water dikinase 1 (392 aa).

N-acetylserine is present on S2. Residue C31 is part of the active site. ATP contacts are provided by residues K32, 67 to 69 (GMD), D87, D110, and 161 to 164 (GGQT). D69 provides a ligand contact to Mg(2+). D110 is a binding site for Mg(2+). A Mg(2+)-binding site is contributed by D265.

The protein belongs to the selenophosphate synthase 1 family. Class II subfamily. In terms of assembly, homodimer. Heterodimer with isoform 3. As to quaternary structure, homodimer. Heterodimer with isoform 4. Homodimer. Heterodimer with isoform 1. In terms of assembly, homodimer. Heterodimer with isoform 2. The cofactor is Mg(2+). Gradually expressed during the cell cycle until G2/M phase and then decreases. As to expression, gradually expressed during the cell cycle until S phase and then decreases.

Its subcellular location is the cell membrane. It localises to the nucleus membrane. The protein localises to the cytoplasm. It catalyses the reaction hydrogenselenide + ATP + H2O = selenophosphate + AMP + phosphate + 2 H(+). Its activity is regulated as follows. Activated by phosphate ions and by potassium ions. Its function is as follows. Synthesizes selenophosphate from selenide and ATP. The protein is Selenide, water dikinase 1 (SEPHS1) of Homo sapiens (Human).